The primary structure comprises 205 residues: N-(5'-phosphoribosyl)anthranilate isomerase (205 aa).

The protein belongs to the TrpF family.

It catalyses the reaction N-(5-phospho-beta-D-ribosyl)anthranilate = 1-(2-carboxyphenylamino)-1-deoxy-D-ribulose 5-phosphate. It functions in the pathway amino-acid biosynthesis; L-tryptophan biosynthesis; L-tryptophan from chorismate: step 3/5. This chain is N-(5'-phosphoribosyl)anthranilate isomerase (TRP1), found in Zygosaccharomyces bailii.